The following is a 1159-amino-acid chain: Cation channel sperm-associated auxiliary subunit gamma (1159 aa).

Positions Met-1–Leu-35 are cleaved as a signal peptide. Over Trp-36–Arg-1065 the chain is Extracellular. 2 disulfides stabilise this stretch: Cys-44-Cys-105 and Cys-159-Cys-165. Asn-102 carries an N-linked (GlcNAc...) asparagine glycan. N-linked (GlcNAc...) asparagine glycosylation occurs at Asn-177. Cys-288 and Cys-343 are oxidised to a cystine. The N-linked (GlcNAc...) asparagine glycan is linked to Asn-355. Cysteines 394 and 402 form a disulfide. N-linked (GlcNAc...) asparagine glycosylation is found at Asn-426 and Asn-574. 5 disulfides stabilise this stretch: Cys-638–Cys-860, Cys-806–Cys-834, Cys-882–Cys-1046, Cys-909–Cys-918, and Cys-1010–Cys-1016. A helical transmembrane segment spans residues Ala-1066–Phe-1087. Residues Cys-1088–Thr-1159 lie on the Cytoplasmic side of the membrane. The tract at residues Phe-1138–Thr-1159 is disordered. Over residues Met-1142–Thr-1159 the composition is skewed to basic and acidic residues.

It belongs to the CATSPERG family. In terms of assembly, component of the CatSper complex or CatSpermasome composed of the core pore-forming members CATSPER1, CATSPER2, CATSPER3 and CATSPER4 as well as auxiliary members CATSPERB, CATSPERG, CATSPERD, CATSPERE, CATSPERZ, SCLO6C1, TMEM249, TMEM262 and EFCAB9. HSPA1 may be an additional auxiliary complex member. The core complex members CATSPER1, CATSPER2, CATSPER3 and CATSPER4 form a heterotetrameric channel. The auxiliary CATSPERB, CATSPERG, CATSPERD and CATSPERE subunits form a pavilion-like structure over the pore which stabilizes the complex through interactions with CATSPER4, CATSPER3, CATSPER1 and CATSPER2 respectively. TMEM262/CATSPERH interacts with CATSPERB, further stabilizing the complex. C2CD6/CATSPERT interacts at least with CATSPERD and is required for targeting the CatSper complex in the flagellar membrane.

It localises to the cell projection. The protein localises to the cilium. It is found in the flagellum membrane. Auxiliary component of the CatSper complex, a complex involved in sperm cell hyperactivation. Sperm cell hyperactivation is needed for sperm motility which is essential late in the preparation of sperm for fertilization. This is Cation channel sperm-associated auxiliary subunit gamma from Macaca fascicularis (Crab-eating macaque).